The following is a 372-amino-acid chain: MAFKQLVAAISLALSLTTANAAVVKEKRATCSNGATVGDASCCAWFDVLDDIQQNLFQGGQCGAEAHESIRLVFHDAIAISPAMEAQGKFGGGGADGSIMIFDDIEPNFHPNIGLDEIINLQKPFVQKHGVTPGAFIAFAGAVALSNCPGAPQMNFFTGRAPATQPAPDGLVPEPFHTVDQIIARVNDAGEFDELELVWMLSAHSVAAVNDVDPTVQGLPFDSTPGIFDSQFFVETQFRGILFPGSGGNQGEVESGMAGEIRIQTDHTLARDSRTACEWQSFVNNQSKLVSDFQFIFLALTQLGQDPNAMTDCSDVIPISKPIPGNLPFSFFPPGKSMKDVEQACAETPFPSLVTLPGPATSVARIPPPPGA.

An N-terminal signal peptide occupies residues 1 to 21; sequence MAFKQLVAAISLALSLTTANA. The propeptide occupies 22–28; that stretch reads AVVKEKR. Intrachain disulfides connect cysteine 31/cysteine 43, cysteine 42/cysteine 313, cysteine 62/cysteine 148, and cysteine 277/cysteine 345. The active-site Proton acceptor is histidine 75. Ca(2+) is bound by residues aspartate 76, glycine 94, aspartate 96, and serine 98. Histidine 204 contributes to the heme b binding site. 5 residues coordinate Ca(2+): serine 205, aspartate 222, threonine 224, isoleucine 227, and aspartate 229. N-linked (GlcNAc...) asparagine glycosylation is present at asparagine 285.

The protein belongs to the peroxidase family. Ligninase subfamily. The cofactor is heme b. Ca(2+) is required as a cofactor.

The catalysed reaction is 1-(3,4-dimethoxyphenyl)-2-(2-methoxyphenoxy)propane-1,3-diol + H2O2 = 3,4-dimethoxybenzaldehyde + guaiacol + glycolaldehyde + H2O. The enzyme catalyses 2 (3,4-dimethoxyphenyl)methanol + H2O2 = 2 (3,4-dimethoxyphenyl)methanol radical + 2 H2O. It participates in secondary metabolite metabolism; lignin degradation. In terms of biological role, depolymerization of lignin. Catalyzes the C(alpha)-C(beta) cleavage of the propyl side chains of lignin. The sequence is that of Ligninase A (LIPA) from Phanerodontia chrysosporium (White-rot fungus).